A 352-amino-acid polypeptide reads, in one-letter code: GTPase Obg (352 aa).

The Obg domain maps to 1-159; it reads MHFLDQAKIY…MWVWLRLKLL (159 aa). The OBG-type G domain occupies 160-327; sequence ADVGLLGLPN…LLDAVLGYLP (168 aa). GTP-binding positions include 166–173, 191–195, 212–215, 279–282, and 308–310; these read GLPNAGKS, FTTLV, DIPG, NKLD, and SGA. The Mg(2+) site is built by Ser173 and Thr193. Residues 329 to 352 form a disordered region; that stretch reads STSTETKGSEVEEVDEEGGEWSPI. The segment covering 339-352 has biased composition (acidic residues); that stretch reads VEEVDEEGGEWSPI.

Belongs to the TRAFAC class OBG-HflX-like GTPase superfamily. OBG GTPase family. In terms of assembly, monomer. It depends on Mg(2+) as a cofactor.

The protein resides in the cytoplasm. In terms of biological role, an essential GTPase which binds GTP, GDP and possibly (p)ppGpp with moderate affinity, with high nucleotide exchange rates and a fairly low GTP hydrolysis rate. Plays a role in control of the cell cycle, stress response, ribosome biogenesis and in those bacteria that undergo differentiation, in morphogenesis control. The sequence is that of GTPase Obg from Erythrobacter litoralis (strain HTCC2594).